Consider the following 287-residue polypeptide: MVTVNPSQAHCLPMKMSLPGFNTLPHTATTIPVSIRSNRTMSFFEDPTKKVRKPYTITKSRENWTEQEHDKFLEALHLFDRDWKKIKAFVGSKTVIQIRSHAQKYFLKVQKNGTKEHLPPPRPKRKANHPYPQKAPKFTLSSSNALFQHDYLYNTNSHPVISTTRKHGLVHCDVSIPSSVIKEEFGVSENCCSTSSSRDKQRTRIVTETNDQESCGKPHRVAPNFAEVYNFIGSVFDPKTTGHVKRLKEMDPINLETVLLLMKNLSVNLTSPEFDEQRKLISSYNAS.

The region spanning T56–Q110 is the HTH myb-type domain. The segment at residues W83–F106 is a DNA-binding region (H-T-H motif). The segment at K111 to A135 is disordered.

The protein localises to the nucleus. In terms of biological role, probable transcription factor. The sequence is that of Protein REVEILLE 3 (RVE3) from Arabidopsis thaliana (Mouse-ear cress).